A 27-amino-acid chain; its full sequence is uncharacterized protein (27 aa).

The helical transmembrane segment at Ile-3–Phe-23 threads the bilayer.

It is found in the cell inner membrane. This is an uncharacterized protein from Escherichia coli (strain K12).